The primary structure comprises 530 residues: uncharacterized protein (530 aa).

Residues 362-408 (NLTPKLNKTNEDIKSDSTSQPQGFPEGNRRVMENPETKVSKTDDEEM) form a disordered region. Residues 388–403 (GNRRVMENPETKVSKT) are compositionally biased toward basic and acidic residues.

This sequence belongs to the IIV-6 030L family.

This is an uncharacterized protein from Invertebrate iridescent virus 6 (IIV-6).